Reading from the N-terminus, the 500-residue chain is 2-isopropylmalate synthase (500 aa).

One can recognise a Pyruvate carboxyltransferase domain in the interval 5–266; sequence LFIFDTTLRD…ITNITTNKIY (262 aa). Asp14, His202, His204, and Asn238 together coordinate Mn(2+). Positions 389–500 are regulatory domain; it reads KLEYLQVTSG…VDAINKFIVD (112 aa).

It belongs to the alpha-IPM synthase/homocitrate synthase family. LeuA type 1 subfamily. Homodimer. Mn(2+) serves as cofactor.

It is found in the cytoplasm. It catalyses the reaction 3-methyl-2-oxobutanoate + acetyl-CoA + H2O = (2S)-2-isopropylmalate + CoA + H(+). Its pathway is amino-acid biosynthesis; L-leucine biosynthesis; L-leucine from 3-methyl-2-oxobutanoate: step 1/4. Functionally, catalyzes the condensation of the acetyl group of acetyl-CoA with 3-methyl-2-oxobutanoate (2-ketoisovalerate) to form 3-carboxy-3-hydroxy-4-methylpentanoate (2-isopropylmalate). This is 2-isopropylmalate synthase from Parabacteroides distasonis (strain ATCC 8503 / DSM 20701 / CIP 104284 / JCM 5825 / NCTC 11152).